The chain runs to 3080 residues: Adhesion G-protein coupled receptor G4 (3080 aa).

An N-terminal signal peptide occupies residues 1 to 27 (MKEHIIYQKLYGLILMSSFIFLSDTLS). The Extracellular segment spans residues 28–2740 (LKGKKLDFFG…SRSTVDSVNE (2713 aa)). The Pentraxin (PTX) domain occupies 29 to 228 (KGKKLDFFGR…IPTVDRTLRC (200 aa)). Intrachain disulfides connect Cys-58–Cys-123 and Cys-200–Cys-228. A Mg(2+)-binding site is contributed by Asp-202. Residues Asn-233, Asn-487, Asn-836, and Asn-899 are each glycosylated (N-linked (GlcNAc...) asparagine). A compositionally biased stretch (polar residues) spans 946–959 (SEGISAGSPTSGST). The segment at 946-965 (SEGISAGSPTSGSTHIFGEP) is disordered. N-linked (GlcNAc...) asparagine glycosylation occurs at Asn-1020. A disordered region spans residues 1274 to 1348 (VTEMSPSKNS…ITPTLTSSNT (75 aa)). 3 stretches are compositionally biased toward polar residues: residues 1277–1296 (MSPSKNSFISYSRGTPSLEM), 1305–1315 (TKISSHQTHSP), and 1324–1348 (SDGNLASSPTSGSTQITPTLTSSNT). A glycan (N-linked (GlcNAc...) asparagine) is linked at Asn-1519. The segment covering 2109–2139 (SRTTITANPRTVSHPSSFSRKTMSPSTTDHT) has biased composition (polar residues). Residues 2109 to 2141 (SRTTITANPRTVSHPSSFSRKTMSPSTTDHTLS) are disordered. 2 N-linked (GlcNAc...) asparagine glycosylation sites follow: Asn-2361 and Asn-2640. A GAIN-B domain is found at 2578–2734 (MAFSIHSYEE…GVLMDLSRST (157 aa)). Cystine bridges form between Cys-2685–Cys-2716 and Cys-2704–Cys-2718. The GPS stretch occupies residues 2685-2734 (CAFWDFENNNGLGGWNSSGCKVKETNVNYTICQCDHLTHFGVLMDLSRST). Residues 2723–2734 (HFGVLMDLSRST) form a stachel region. Residues 2741–2766 (QILALITYTGCGISSIFLGVAVVTYI) traverse the membrane as a helical segment. The Cytoplasmic portion of the chain corresponds to 2767-2777 (AFHKLRKDYPA). A helical membrane pass occupies residues 2778 to 2800 (KILINLCTALLMLNLVFLINSWL). The Extracellular portion of the chain corresponds to 2801 to 2806 (SSFQKV). The chain crosses the membrane as a helical span at residues 2807 to 2835 (GVCITAAVALHYFLLVSFTWMGLEAVHMY). A disulfide bridge connects residues Cys-2809 and Cys-2886. Residues 2836-2849 (LALVKVFNIYIPNY) lie on the Cytoplasmic side of the membrane. Residues 2850 to 2870 (ILKFCLVGWGIPAIMVAITVS) traverse the membrane as a helical segment. Residues 2871–2892 (VKKDLYGTLSPTTPFCWIKDDS) lie on the Extracellular side of the membrane. A helical membrane pass occupies residues 2893–2918 (IFYISVVAYFCLIFLMNLSMFCTVLV). Residues 2919–2937 (QLNSVKSQIQKTRRKMILH) lie on the Cytoplasmic side of the membrane. A helical transmembrane segment spans residues 2938–2961 (DLKGTMSLTFLLGLTWGFAFFAWG). Topologically, residues 2962–2965 (PMRN) are extracellular. Residues 2966 to 2989 (FFLYLFAIFNTLQGFFIFVFHCVM) form a helical membrane-spanning segment. The Cytoplasmic segment spans residues 2990–3080 (KESVREQWQI…FDKDPYCSSP (91 aa)). A compositionally biased stretch (polar residues) spans 3051–3065 (FKSLGSAQGTPSEIS). The tract at residues 3051–3080 (FKSLGSAQGTPSEISFPNDDFDKDPYCSSP) is disordered.

This sequence belongs to the G-protein coupled receptor 2 family. Adhesion G-protein coupled receptor (ADGR) subfamily. In terms of assembly, homodimer; homodimerizes via its Pentraxin domain in a calcium-independent manner. Heterodimer of 2 chains generated by proteolytic processing; the large extracellular N-terminal fragment and the membrane-bound C-terminal fragment predominantly remain associated and non-covalently linked. Post-translationally, autoproteolytically processed at the GPS region of the GAIN-B domain; this cleavage modulates receptor activity. In terms of processing, N-glycosylated. In terms of tissue distribution, detected in fetal retina. Highly expressed in normal enterochromaffin cells and in neuroendocrine carcinoma. Detected in normal liver; highly expressed in primary liver carcinoma.

It localises to the membrane. With respect to regulation, forms a heterodimer of 2 chains generated by proteolytic processing that remain associated through non-covalent interactions mediated by the GAIN-B domain. In the inactivated receptor, the Stachel sequence (also named stalk) is embedded in the GAIN-B domain, where it adopts a beta-strand conformation. On activation, the Stachel moves into the 7 transmembrane region and adopts a twisted hook-shaped configuration that forms contacts within the receptor, leading to coupling of a G-alpha protein, which activates signaling. The cleaved GAIN-B and N-terminal domains can then dissociate from the rest of the receptor. Its function is as follows. Orphan adhesion G-protein coupled receptor (aGPCR). Ligand binding causes a conformation change that triggers signaling via guanine nucleotide-binding proteins (G proteins) and modulates the activity of downstream effectors, such as adenylate cyclase. ADGRG4 is coupled to G(s) G proteins and mediates activation of adenylate cyclase activity. May be act as sensor of mechanical forces. In Homo sapiens (Human), this protein is Adhesion G-protein coupled receptor G4.